A 100-amino-acid polypeptide reads, in one-letter code: Small ribosomal subunit protein uS14 (100 aa).

It belongs to the universal ribosomal protein uS14 family. In terms of assembly, part of the 30S ribosomal subunit. Contacts proteins S3 and S10.

Functionally, binds 16S rRNA, required for the assembly of 30S particles and may also be responsible for determining the conformation of the 16S rRNA at the A site. This is Small ribosomal subunit protein uS14 from Rippkaea orientalis (strain PCC 8801 / RF-1) (Cyanothece sp. (strain PCC 8801)).